The chain runs to 405 residues: FAD-dependent monooxygenase thnD (405 aa).

FAD-binding residues include glutamate 30, alanine 45, arginine 106, aspartate 308, and glycine 321.

Belongs to the paxM FAD-dependent monooxygenase family. FAD serves as cofactor.

FAD-dependent monooxygenase; part of the gene cluster that produces the tetronate natural products trihazones. Transcription analysis of thnD confirmed this gene is expressed, hence its role in the biosynthetic pathway remains cryptic. The pathway begins with the formation of trihazone A by the hybrid PKS-NRPS synthetase thnA and the trans-enoyl reductase thnE. Trihazone A is further decarboxylated by the 2-oxoglutarate-dependent dioxygenase thnC to produce trihazone D. The function of the FAD-dependent monooxygenase thnD has still to be identified. This Trichoderma harzianum (Hypocrea lixii) protein is FAD-dependent monooxygenase thnD.